A 426-amino-acid polypeptide reads, in one-letter code: Dihydropyrimidine dehydrogenase (NADP(+)), chloroplastic (426 aa).

The N-terminal 44 residues, 1 to 44, are a transit peptide targeting the chloroplast; sequence MASMSFALNRFSGLSSKTTLSADFDPSSRRSFLPPTRVGLKISS. Ala45 is modified (N-acetylalanine). Substrate-binding positions include Asn129 and 188–190; that span reads NFS. Catalysis depends on Cys191, which acts as the Nucleophile. A substrate-binding site is contributed by 256–257; that stretch reads NT. A disordered region spans residues 395-414; the sequence is VEQRKAEKRGLKSDKDWTGD.

It belongs to the dihydropyrimidine dehydrogenase family. In terms of tissue distribution, expressed in roots, leaves, stems, siliques and flowers. Highly expressed ion dry seeds.

It localises to the plastid. Its subcellular location is the chloroplast. It catalyses the reaction 5,6-dihydrouracil + NADP(+) = uracil + NADPH + H(+). Its pathway is amino-acid biosynthesis; beta-alanine biosynthesis. Involved in pyrimidine base degradation. Catalyzes the reduction of uracil to 5,6-dihydrouracil (DHU) by using NADH as a specific cosubstrate and the reduction of thymine to 5,6-dihydrothymine (DHT). Involved in the recycling of nitrogen from nucleobases to general nitrogen metabolism. This Arabidopsis thaliana (Mouse-ear cress) protein is Dihydropyrimidine dehydrogenase (NADP(+)), chloroplastic.